The sequence spans 273 residues: MSVQSAIRRKTAPDLRIRKNGEPIVMLTSYHAHTAALVDRHCDAILVGDSLGNVMHGFETTVPVTLEMMILQGCAVMRGSSQALVVVDMPFGSYEGSKEQAFQSAVRIMKETLCGAVKLEGGARMAETVAFLSERGIPVMGHIGLTPQSINTLGSFRAQGREEANWAPIENDARAIAEAGAFSIVIEAVAEPLARKITQSIAVPTIGIGASAACDGQILVLEDMLGLSPRSPKFVRRYGNLGPAIEEAIAGYARDVKSRAFPGPEHVYDMKKS.

Positions 49 and 88 each coordinate Mg(2+). 3-methyl-2-oxobutanoate contacts are provided by residues 49-50 (DS), Asp88, and Lys118. Mg(2+) is bound at residue Glu120. Catalysis depends on Glu187, which acts as the Proton acceptor.

The protein belongs to the PanB family. As to quaternary structure, homodecamer; pentamer of dimers. It depends on Mg(2+) as a cofactor.

The protein localises to the cytoplasm. It catalyses the reaction 3-methyl-2-oxobutanoate + (6R)-5,10-methylene-5,6,7,8-tetrahydrofolate + H2O = 2-dehydropantoate + (6S)-5,6,7,8-tetrahydrofolate. The protein operates within cofactor biosynthesis; (R)-pantothenate biosynthesis; (R)-pantoate from 3-methyl-2-oxobutanoate: step 1/2. Catalyzes the reversible reaction in which hydroxymethyl group from 5,10-methylenetetrahydrofolate is transferred onto alpha-ketoisovalerate to form ketopantoate. The chain is 3-methyl-2-oxobutanoate hydroxymethyltransferase 3 from Bradyrhizobium diazoefficiens (strain JCM 10833 / BCRC 13528 / IAM 13628 / NBRC 14792 / USDA 110).